A 254-amino-acid chain; its full sequence is Small ribosomal subunit protein uS2 (254 aa).

The segment covering 228–248 (RKERKGQDAEEELKKASEPKA) has biased composition (basic and acidic residues). Residues 228–254 (RKERKGQDAEEELKKASEPKAAEAAAE) form a disordered region.

The protein belongs to the universal ribosomal protein uS2 family.

This Nitratidesulfovibrio vulgaris (strain ATCC 29579 / DSM 644 / CCUG 34227 / NCIMB 8303 / VKM B-1760 / Hildenborough) (Desulfovibrio vulgaris) protein is Small ribosomal subunit protein uS2.